The chain runs to 549 residues: Glucose-6-phosphate isomerase (549 aa).

An N6-acetyllysine mark is found at lysine 80, lysine 228, and lysine 234. Residue glutamate 355 is the Proton donor of the active site. Residues histidine 386 and lysine 514 contribute to the active site.

It belongs to the GPI family.

It localises to the cytoplasm. The catalysed reaction is alpha-D-glucose 6-phosphate = beta-D-fructose 6-phosphate. It participates in carbohydrate biosynthesis; gluconeogenesis. It functions in the pathway carbohydrate degradation; glycolysis; D-glyceraldehyde 3-phosphate and glycerone phosphate from D-glucose: step 2/4. In terms of biological role, catalyzes the reversible isomerization of glucose-6-phosphate to fructose-6-phosphate. The polypeptide is Glucose-6-phosphate isomerase (Shigella flexneri serotype 5b (strain 8401)).